A 198-amino-acid polypeptide reads, in one-letter code: RNA 2',3'-cyclic phosphodiesterase (198 aa).

Residue His39 is the Proton donor of the active site. Short sequence motifs (HXTX) lie at residues 39–42 (HLTL) and 130–133 (HITL). His130 acts as the Proton acceptor in catalysis.

It belongs to the 2H phosphoesterase superfamily. ThpR family.

The enzyme catalyses a 3'-end 2',3'-cyclophospho-ribonucleotide-RNA + H2O = a 3'-end 2'-phospho-ribonucleotide-RNA + H(+). Its function is as follows. Hydrolyzes RNA 2',3'-cyclic phosphodiester to an RNA 2'-phosphomonoester. The polypeptide is RNA 2',3'-cyclic phosphodiesterase (Thermus thermophilus (strain ATCC 27634 / DSM 579 / HB8)).